Here is a 149-residue protein sequence, read N- to C-terminus: Small ribosomal subunit protein uS15 (149 aa).

Residues 1-14 are compositionally biased toward basic residues; it reads MGRMHTHRHGKSHS. Residues 1-20 are disordered; it reads MGRMHTHRHGKSHSIRPATL.

It belongs to the universal ribosomal protein uS15 family. Part of the 30S ribosomal subunit.

This Nitrosopumilus maritimus (strain SCM1) protein is Small ribosomal subunit protein uS15.